A 79-amino-acid polypeptide reads, in one-letter code: Sulfur carrier protein TusA (79 aa).

Cys-17 (cysteine persulfide intermediate) is an active-site residue.

It belongs to the sulfur carrier protein TusA family.

Its subcellular location is the cytoplasm. Sulfur carrier protein which probably makes part of a sulfur-relay system. The sequence is that of Sulfur carrier protein TusA from Pasteurella multocida (strain Pm70).